The chain runs to 262 residues: Orotidine 5'-phosphate decarboxylase (262 aa).

Substrate is bound by residues aspartate 35, 57–59, 89–98, tyrosine 215, and arginine 233; these read KTH and DRKFADIGNT. The Proton donor role is filled by lysine 91.

This sequence belongs to the OMP decarboxylase family.

The catalysed reaction is orotidine 5'-phosphate + H(+) = UMP + CO2. It functions in the pathway pyrimidine metabolism; UMP biosynthesis via de novo pathway; UMP from orotate: step 2/2. This is Orotidine 5'-phosphate decarboxylase (URA3) from Pichia kudriavzevii (Yeast).